Reading from the N-terminus, the 123-residue chain is Putative iron-sulfur cluster insertion protein ErpA (123 aa).

3 residues coordinate iron-sulfur cluster: cysteine 51, cysteine 115, and cysteine 117.

The protein belongs to the HesB/IscA family. In terms of assembly, homodimer. Iron-sulfur cluster is required as a cofactor.

Required for insertion of 4Fe-4S clusters. This Burkholderia lata (strain ATCC 17760 / DSM 23089 / LMG 22485 / NCIMB 9086 / R18194 / 383) protein is Putative iron-sulfur cluster insertion protein ErpA.